Consider the following 453-residue polypeptide: Membrane-bound acylglycerophosphatidylinositol O-acyltransferase mboa-7 (453 aa).

7 helical membrane passes run 4–24 (ILGL…FSFG), 36–56 (ILAS…PKIV), 79–99 (LYVF…HYIL), 154–174 (AYFY…QMLI), 195–215 (VRLL…PLDI), 220–240 (AIWE…FVVF), and 244–264 (VYSA…GIYP). Asn-319 carries N-linked (GlcNAc...) asparagine glycosylation. The active site involves His-350. The next 2 membrane-spanning stretches (helical) occupy residues 354-374 (AGYF…DVIF) and 421-441 (FWSS…IYSA).

It belongs to the membrane-bound acyltransferase family. As to expression, expressed ubiquitously throughout development from early embryo to larval and adult stages. In adults, strongly expressed in pharyngeal muscle, body wall muscle, vulval cells, distal tip cells, intestinal cells and spermatheca.

It is found in the membrane. It catalyses the reaction 1-octadecanoyl-sn-glycero-3-phospho-(1D-myo-inositol) + (5Z,8Z,11Z,14Z,17Z)-eicosapentaenoyl-CoA = 1-octadecanoyl-2-(5Z,8Z,11Z,14Z,17Z-eicosapentaenoyl)-sn-glycero-3-phospho-(1D-myo-inositol) + CoA. It carries out the reaction a 1-acyl-sn-glycero-3-phospho-(1D-myo-inositol) + (5Z,8Z,11Z,14Z,17Z)-eicosapentaenoyl-CoA = a 1-acyl-2-(5Z,8Z,11Z,14Z,17Z-eicosapentaenoyl)-sn-glycero-3-phospho-(1D-myo-inositol) + CoA. The catalysed reaction is a 1-acyl-sn-glycero-3-phospho-(1D-myo-inositol) + (5Z,8Z,11Z,14Z)-eicosatetraenoyl-CoA = a 1-acyl-2-(5Z,8Z,11Z,14Z-eicosatetraenoyl)-sn-glycero-3-phospho-(1D-myo-inositol) + CoA. Its pathway is lipid metabolism; phospholipid metabolism. In terms of biological role, acyltransferase which mediates the conversion of lysophosphatidylinositol (1-acyl-sn-glycero-3-phosphatidylinositol or LPI) into phosphatidylinositol (1,2-diacyl-sn-glycero-3-phosphoinositol or PI) (LPIAT activity). Prefers sn-2-LPI rather than sn-1-LPI as the acyl acceptor. Lysophospholipid acyltransferases (LPLATs) catalyze the reacylation step of the phospholipid remodeling pathway also known as the Lands cycle. Involved in the selective incorporation of arachidonoyl-CoA ((5Z,8Z,11Z,14Z)-eicosatetraenoyl-CoA) and (5Z,8Z,11Z,14Z,17Z)-eicosapentaenoyl-CoA (EPA-CoA) into PI. Besides its role in biomembranes, PI is a precursor of PI 3-phosphate (PIP3) and its fatty acid composition has an important role in PI3P signaling. The sequence is that of Membrane-bound acylglycerophosphatidylinositol O-acyltransferase mboa-7 from Caenorhabditis elegans.